The chain runs to 264 residues: MEAFWESRAGHWAGGPAPGQFYRIPATPSGLMDPASAPCEGPITRTQNPMVTGTSVLGVKFDGGVVIAADMLGSYGSLARFRNISRIMRVNDSTMLGASGDYADFQYLKQVLGQMVIDEELLGDGHSYSPRAIHSWLTRAMYSRRSKMNPLWNTMVIGGYADGESFLGYVDMLGVAYEAPSLATGYGAYLAQPLLREVLEKQPVLSQTEARELVERCMRVLYYRDARSYNRFQIATVTEKGVEIEGPLSAQTNWDIAHMISGFE.

An N-acetylmethionine modification is found at Met-1. Residues 1–45 constitute a propeptide that is removed on maturation; sequence MEAFWESRAGHWAGGPAPGQFYRIPATPSGLMDPASAPCEGPITR. At Tyr-102 the chain carries Phosphotyrosine.

Belongs to the peptidase T1B family. As to quaternary structure, the 26S proteasome consists of a 20S proteasome core and two 19S regulatory subunits. The 20S proteasome core is a barrel-shaped complex made of 28 subunits that are arranged in four stacked rings. The two outer rings are each formed by seven alpha subunits, and the two inner rings are formed by seven beta subunits. The proteolytic activity is exerted by three beta-subunits PSMB5, PSMB6 and PSMB7. Forms a ternary complex with SMAD1 and OAZ1 before PSMB4 is incorporated into the 20S proteasome. Interacts with PRPF19. As to expression, detected in liver (at protein level).

Its subcellular location is the cytoplasm. It is found in the nucleus. In terms of biological role, non-catalytic component of the 20S core proteasome complex involved in the proteolytic degradation of most intracellular proteins. This complex plays numerous essential roles within the cell by associating with different regulatory particles. Associated with two 19S regulatory particles, forms the 26S proteasome and thus participates in the ATP-dependent degradation of ubiquitinated proteins. The 26S proteasome plays a key role in the maintenance of protein homeostasis by removing misfolded or damaged proteins that could impair cellular functions, and by removing proteins whose functions are no longer required. Associated with the PA200 or PA28, the 20S proteasome mediates ubiquitin-independent protein degradation. This type of proteolysis is required in several pathways including spermatogenesis (20S-PA200 complex) or generation of a subset of MHC class I-presented antigenic peptides (20S-PA28 complex). SMAD1/OAZ1/PSMB4 complex mediates the degradation of the CREBBP/EP300 repressor SNIP1. The chain is Proteasome subunit beta type-4 (Psmb4) from Mus musculus (Mouse).